The following is a 127-amino-acid chain: Large ribosomal subunit protein bL12 (127 aa).

Belongs to the bacterial ribosomal protein bL12 family. In terms of assembly, homodimer. Part of the ribosomal stalk of the 50S ribosomal subunit. Forms a multimeric L10(L12)X complex, where L10 forms an elongated spine to which 2 to 4 L12 dimers bind in a sequential fashion. Binds GTP-bound translation factors.

Functionally, forms part of the ribosomal stalk which helps the ribosome interact with GTP-bound translation factors. Is thus essential for accurate translation. This Syntrophotalea carbinolica (strain DSM 2380 / NBRC 103641 / GraBd1) (Pelobacter carbinolicus) protein is Large ribosomal subunit protein bL12.